The following is a 342-amino-acid chain: Deoxyguanosinetriphosphate triphosphohydrolase-like protein (342 aa).

The region spanning 75–190 is the HD domain; the sequence is RLVHTLEVSQ…VRFADKIAYV (116 aa).

The protein belongs to the dGTPase family. Type 2 subfamily.

The sequence is that of Deoxyguanosinetriphosphate triphosphohydrolase-like protein from Clostridium perfringens (strain 13 / Type A).